Reading from the N-terminus, the 289-residue chain is S-methyl-5'-thioadenosine phosphorylase (289 aa).

Residues Ser-24, 66 to 67, and 99 to 100 contribute to the phosphate site; these read RH and TA. Residue Met-202 participates in substrate binding. A phosphate-binding site is contributed by Thr-203. Position 226-228 (226-228) interacts with substrate; that stretch reads DYD.

The protein belongs to the PNP/MTAP phosphorylase family. MTAP subfamily. As to quaternary structure, homotrimer. In embryos, expressed in the fat body and visceral mesoderm.

It localises to the cytoplasm. Its subcellular location is the nucleus. The enzyme catalyses S-methyl-5'-thioadenosine + phosphate = 5-(methylsulfanyl)-alpha-D-ribose 1-phosphate + adenine. Its pathway is amino-acid biosynthesis; L-methionine biosynthesis via salvage pathway; S-methyl-5-thio-alpha-D-ribose 1-phosphate from S-methyl-5'-thioadenosine (phosphorylase route): step 1/1. In terms of biological role, catalyzes the reversible phosphorylation of S-methyl-5'-thioadenosine (MTA) to adenine and 5-methylthioribose-1-phosphate. Involved in the breakdown of MTA, a major by-product of polyamine biosynthesis. Responsible for the first step in the methionine salvage pathway after MTA has been generated from S-adenosylmethionine. Has broad substrate specificity with 6-aminopurine nucleosides as preferred substrates. This is S-methyl-5'-thioadenosine phosphorylase (Mtap) from Drosophila melanogaster (Fruit fly).